A 465-amino-acid chain; its full sequence is Ribulose bisphosphate carboxylase large chain (465 aa).

At Lys-4 the chain carries N6,N6,N6-trimethyllysine. 2 residues coordinate substrate: Asn-113 and Thr-163. Residue Lys-165 is the Proton acceptor of the active site. Position 167 (Lys-167) interacts with substrate. 3 residues coordinate Mg(2+): Lys-191, Asp-193, and Glu-194. Lys-191 carries the post-translational modification N6-carboxylysine. His-284 functions as the Proton acceptor in the catalytic mechanism. Residues Arg-285, His-317, and Ser-369 each contribute to the substrate site.

Belongs to the RuBisCO large chain family. Type I subfamily. Heterohexadecamer of 8 large chains and 8 small chains; disulfide-linked. The disulfide link is formed within the large subunit homodimers. Mg(2+) is required as a cofactor. Post-translationally, the disulfide bond which can form in the large chain dimeric partners within the hexadecamer appears to be associated with oxidative stress and protein turnover.

The protein resides in the plastid. Its subcellular location is the chloroplast. The catalysed reaction is 2 (2R)-3-phosphoglycerate + 2 H(+) = D-ribulose 1,5-bisphosphate + CO2 + H2O. It catalyses the reaction D-ribulose 1,5-bisphosphate + O2 = 2-phosphoglycolate + (2R)-3-phosphoglycerate + 2 H(+). Functionally, ruBisCO catalyzes two reactions: the carboxylation of D-ribulose 1,5-bisphosphate, the primary event in carbon dioxide fixation, as well as the oxidative fragmentation of the pentose substrate in the photorespiration process. Both reactions occur simultaneously and in competition at the same active site. The chain is Ribulose bisphosphate carboxylase large chain from Casuarina equisetifolia (Beach she-oak).